The sequence spans 507 residues: ATP synthase subunit beta (507 aa).

Residues Met1–Asn22 form a disordered region. Gly183–Thr190 is a binding site for ATP.

Belongs to the ATPase alpha/beta chains family. In terms of assembly, F-type ATPases have 2 components, CF(1) - the catalytic core - and CF(0) - the membrane proton channel. CF(1) has five subunits: alpha(3), beta(3), gamma(1), delta(1), epsilon(1). CF(0) has three main subunits: a(1), b(2) and c(9-12). The alpha and beta chains form an alternating ring which encloses part of the gamma chain. CF(1) is attached to CF(0) by a central stalk formed by the gamma and epsilon chains, while a peripheral stalk is formed by the delta and b chains.

It localises to the cell inner membrane. It catalyses the reaction ATP + H2O + 4 H(+)(in) = ADP + phosphate + 5 H(+)(out). In terms of biological role, produces ATP from ADP in the presence of a proton gradient across the membrane. The catalytic sites are hosted primarily by the beta subunits. The sequence is that of ATP synthase subunit beta from Ehrlichia chaffeensis (strain ATCC CRL-10679 / Arkansas).